We begin with the raw amino-acid sequence, 228 residues long: ATP phosphoribosyltransferase (228 aa).

Belongs to the ATP phosphoribosyltransferase family. Short subfamily. Heteromultimer composed of HisG and HisZ subunits.

The protein localises to the cytoplasm. The catalysed reaction is 1-(5-phospho-beta-D-ribosyl)-ATP + diphosphate = 5-phospho-alpha-D-ribose 1-diphosphate + ATP. Its pathway is amino-acid biosynthesis; L-histidine biosynthesis; L-histidine from 5-phospho-alpha-D-ribose 1-diphosphate: step 1/9. Functionally, catalyzes the condensation of ATP and 5-phosphoribose 1-diphosphate to form N'-(5'-phosphoribosyl)-ATP (PR-ATP). Has a crucial role in the pathway because the rate of histidine biosynthesis seems to be controlled primarily by regulation of HisG enzymatic activity. The polypeptide is ATP phosphoribosyltransferase (Moorella thermoacetica (strain ATCC 39073 / JCM 9320)).